A 381-amino-acid polypeptide reads, in one-letter code: Tryptophan--tRNA ligase (381 aa).

A 'HIGH' region motif is present at residues proline 82 to histidine 90. A 'KMSKS' region motif is present at residues lysine 254–serine 258.

This sequence belongs to the class-I aminoacyl-tRNA synthetase family.

The protein resides in the cytoplasm. The catalysed reaction is tRNA(Trp) + L-tryptophan + ATP = L-tryptophyl-tRNA(Trp) + AMP + diphosphate + H(+). The polypeptide is Tryptophan--tRNA ligase (Sulfolobus acidocaldarius (strain ATCC 33909 / DSM 639 / JCM 8929 / NBRC 15157 / NCIMB 11770)).